The sequence spans 283 residues: Protease HtpX (283 aa).

The next 2 membrane-spanning stretches (helical) occupy residues 4–24 (ILLFLATNMAVMLVLGIILNV) and 33–53 (GGILIMALLFGFAGSLISLFL). His139 is a binding site for Zn(2+). Glu140 is an active-site residue. His143 contacts Zn(2+). Helical transmembrane passes span 147–167 (GDMVTMALLQGVLNTFVIFLS) and 190–210 (IYFLVSMVLEMLFGVLASIIA). Residue Glu218 coordinates Zn(2+).

The protein belongs to the peptidase M48B family. It depends on Zn(2+) as a cofactor.

The protein resides in the cell inner membrane. In Haemophilus influenzae (strain 86-028NP), this protein is Protease HtpX.